The sequence spans 356 residues: 3-dehydroquinate synthase (356 aa).

NAD(+) is bound by residues 71–76 (EGEASK), 105–109 (GVTGD), 129–130 (TS), Lys142, and Lys151. Zn(2+) contacts are provided by Glu184, His247, and His264.

The protein belongs to the sugar phosphate cyclases superfamily. Dehydroquinate synthase family. The cofactor is Co(2+). Requires Zn(2+) as cofactor. It depends on NAD(+) as a cofactor.

It localises to the cytoplasm. It carries out the reaction 7-phospho-2-dehydro-3-deoxy-D-arabino-heptonate = 3-dehydroquinate + phosphate. Its pathway is metabolic intermediate biosynthesis; chorismate biosynthesis; chorismate from D-erythrose 4-phosphate and phosphoenolpyruvate: step 2/7. Functionally, catalyzes the conversion of 3-deoxy-D-arabino-heptulosonate 7-phosphate (DAHP) to dehydroquinate (DHQ). In Lactococcus lactis subsp. cremoris (strain SK11), this protein is 3-dehydroquinate synthase.